A 638-amino-acid polypeptide reads, in one-letter code: Probable potassium transport system protein Kup (638 aa).

Residues 1-20 (MQVEHEVATEGGQAPASSGH) form a disordered region. A run of 12 helical transmembrane segments spans residues 24–44 (IAGLAVAAIGVVYGDIGTSPL), 67–87 (ILSLVFWALVTVVSAKYVVFI), 115–135 (AWWLSVLGVFGAALFYGDGMI), 153–173 (PAFKPFVIPIALVVLVGLFVM), 181–201 (VGAIFGPVMVCWFLVLAVLGI), 228–248 (LIGWLALGAVVLAITGGEALY), 263–283 (WFSLVFPALYLNYLGQGALIL), 301–321 (LVYPMVGMATLATIIASQAVI), 353–373 (IYVPGVNWMLLGAVVALVVGF), 382–402 (AYGIAVTLTMMIDTVLAFVVV), 413–433 (AVLFLVVFLAVDIAFFSATTV), and 435–455 (IFAGGWFPLLIGAAIFTLLRT).

Belongs to the HAK/KUP transporter (TC 2.A.72) family.

It localises to the cell inner membrane. The enzyme catalyses K(+)(in) + H(+)(in) = K(+)(out) + H(+)(out). Transport of potassium into the cell. Likely operates as a K(+):H(+) symporter. This chain is Probable potassium transport system protein Kup, found in Azoarcus sp. (strain BH72).